The sequence spans 78 residues: Large ribosomal subunit protein bL28 (78 aa).

The disordered stretch occupies residues 1 to 28 (MSAICQVTGRQPGYGKSVSHSHRRTSRR).

This sequence belongs to the bacterial ribosomal protein bL28 family.

The protein is Large ribosomal subunit protein bL28 of Corynebacterium diphtheriae (strain ATCC 700971 / NCTC 13129 / Biotype gravis).